The following is a 403-amino-acid chain: Alkaline protease 1 (403 aa).

Residues 1 to 21 form the signal peptide; the sequence is MQSIKRTLLLLGAVLPAVLAG. Positions 22-121 are excised as a propeptide; it reads PIFPHRRAPT…VEEDQVWHLF (100 aa). An Inhibitor I9 domain is found at 36-120; that stretch reads KYIVTFKSDV…AVEEDQVWHL (85 aa). Residues 130-403 enclose the Peptidase S8 domain; that stretch reads PWGLGSISHK…PNLLAYNGNA (274 aa). Residues aspartate 162 and histidine 193 each act as charge relay system in the active site. N-linked (GlcNAc...) asparagine glycans are attached at residues asparagine 253 and asparagine 309. Serine 349 (charge relay system) is an active-site residue.

It belongs to the peptidase S8 family.

Its subcellular location is the secreted. The catalysed reaction is Hydrolysis of proteins with broad specificity, and of Bz-Arg-OEt &gt; Ac-Tyr-OEt. Does not hydrolyze peptide amides.. Its function is as follows. Secreted alkaline protease that allows assimilation of proteinaceous substrates. This chain is Alkaline protease 1 (alp1), found in Aspergillus flavus.